We begin with the raw amino-acid sequence, 232 residues long: Ion-translocating oxidoreductase complex subunit E (232 aa).

Helical transmembrane passes span 18–38 (ALVQ…VTNG), 39–59 (LGLG…VSII), 69–89 (IPIF…LMNA), 93–113 (ELYQ…AIIG), 128–148 (AFDG…LGAM), and 182–202 (PFLL…LIAA).

The protein belongs to the NqrDE/RnfAE family. The complex is composed of six subunits: RnfA, RnfB, RnfC, RnfD, RnfE and RnfG.

It is found in the cell inner membrane. In terms of biological role, part of a membrane-bound complex that couples electron transfer with translocation of ions across the membrane. This Pseudoalteromonas atlantica (strain T6c / ATCC BAA-1087) protein is Ion-translocating oxidoreductase complex subunit E.